Consider the following 425-residue polypeptide: Glutamyl-tRNA reductase (425 aa).

Residues 49–52, Ser107, 112–114, and Gln118 contribute to the substrate site; these read TCNR and EPQ. Cys50 (nucleophile) is an active-site residue. 187 to 192 contacts NADP(+); the sequence is GAGETI.

It belongs to the glutamyl-tRNA reductase family. As to quaternary structure, homodimer.

The catalysed reaction is (S)-4-amino-5-oxopentanoate + tRNA(Glu) + NADP(+) = L-glutamyl-tRNA(Glu) + NADPH + H(+). It participates in porphyrin-containing compound metabolism; protoporphyrin-IX biosynthesis; 5-aminolevulinate from L-glutamyl-tRNA(Glu): step 1/2. Functionally, catalyzes the NADPH-dependent reduction of glutamyl-tRNA(Glu) to glutamate 1-semialdehyde (GSA). The polypeptide is Glutamyl-tRNA reductase (Pseudomonas syringae pv. syringae (strain B728a)).